A 1044-amino-acid chain; its full sequence is Probable translation initiation factor IF-2 (1044 aa).

In terms of domain architecture, DOD-type homing endonuclease spans 173–265 (FAGTIFGREN…LSLILLRLGI (93 aa)). Residues 451–668 (TTETHNFIAN…LIAGLSQKYL (218 aa)) form the tr-type G domain. GTP-binding positions include 524-528 (DTPGH) and 578-581 (NKID).

Belongs to the TRAFAC class translation factor GTPase superfamily. Classic translation factor GTPase family. IF-2 subfamily. Post-translationally, this protein undergoes a protein self splicing that involves a post-translational excision of the intervening region (intein) followed by peptide ligation.

Its function is as follows. Function in general translation initiation by promoting the binding of the formylmethionine-tRNA to ribosomes. Seems to function along with eIF-2. This Pyrococcus horikoshii (strain ATCC 700860 / DSM 12428 / JCM 9974 / NBRC 100139 / OT-3) protein is Probable translation initiation factor IF-2 (infB).